The sequence spans 410 residues: Histidine--tRNA ligase (410 aa).

It belongs to the class-II aminoacyl-tRNA synthetase family.

It localises to the cytoplasm. The catalysed reaction is tRNA(His) + L-histidine + ATP = L-histidyl-tRNA(His) + AMP + diphosphate + H(+). In Methanoregula boonei (strain DSM 21154 / JCM 14090 / 6A8), this protein is Histidine--tRNA ligase.